Reading from the N-terminus, the 217-residue chain is Transcription antitermination protein NusB (217 aa).

The protein belongs to the NusB family.

In terms of biological role, involved in transcription antitermination. Required for transcription of ribosomal RNA (rRNA) genes. Binds specifically to the boxA antiterminator sequence of the ribosomal RNA (rrn) operons. The sequence is that of Transcription antitermination protein NusB from Microcystis aeruginosa (strain NIES-843 / IAM M-2473).